A 54-amino-acid polypeptide reads, in one-letter code: Glutathione S-transferase 6.7 (54 aa).

It belongs to the GST superfamily. Theta family. As to quaternary structure, homodimer. Post-translationally, the N-terminus is blocked.

The protein resides in the cytoplasm. It catalyses the reaction RX + glutathione = an S-substituted glutathione + a halide anion + H(+). Conjugation of reduced glutathione to a wide number of exogenous and endogenous hydrophobic electrophiles. The protein is Glutathione S-transferase 6.7 of Dicentrarchus labrax (European seabass).